The sequence spans 203 residues: LexA repressor (203 aa).

The H-T-H motif DNA-binding region spans 30–50; it reads VREICQAVSLKSTSTVHGHLK. Catalysis depends on for autocatalytic cleavage activity residues Ser127 and Lys164.

This sequence belongs to the peptidase S24 family. Homodimer.

The catalysed reaction is Hydrolysis of Ala-|-Gly bond in repressor LexA.. Functionally, represses a number of genes involved in the response to DNA damage (SOS response), including recA and lexA. In the presence of single-stranded DNA, RecA interacts with LexA causing an autocatalytic cleavage which disrupts the DNA-binding part of LexA, leading to derepression of the SOS regulon and eventually DNA repair. The chain is LexA repressor from Clostridium perfringens (strain ATCC 13124 / DSM 756 / JCM 1290 / NCIMB 6125 / NCTC 8237 / Type A).